Consider the following 797-residue polypeptide: Striatin-3 (797 aa).

Met1 bears the N-acetylmethionine mark. Composition is skewed to gly residues over residues 1 to 12 and 33 to 43; these read MDELAGGGGGGP and GGNGAAGGGGP. Residues 1 to 60 are disordered; it reads MDELAGGGGGGPAMASPPRQQQGPGGNMSLSPGGNGAAGGGGPPATEGAGPAAGPELSRP. The span at 44–55 shows a compositional bias: low complexity; that stretch reads PATEGAGPAAGP. Positions 71–79 are caveolin-binding; the sequence is YIQHEWARF. Positions 77-136 form a coiled coil; the sequence is ARFEMERAHWEVERAELQARIAFLQGERKGQENLKKDLVRRIKMLEYALKQERAKYHKLK. Thr150 is modified (phosphothreonine). The calmodulin-binding stretch occupies residues 166–183; the sequence is QNSQLTWKQGRQLLRQYL. 5 positions are modified to phosphoserine: Ser202, Ser214, Ser229, Ser257, and Ser335. The tract at residues 313–336 is disordered; sequence DGEGAGEARSSGDGTEWDKDDLSP. WD repeat units follow at residues 478–517, 531–570, 584–623, 679–718, 721–760, and 767–796; these read SHFD…PAKK, AHIG…VDPY, AHTD…PCIC, QSSN…MIHS, AHLD…CVQE, and KLDE…AKVF.

It belongs to the WD repeat striatin family. As to quaternary structure, tetramerizes. Part of the core of STRIPAK complexes composed of PP2A catalytic and scaffolding subunits, the striatins (PP2A regulatory subunits), the striatin-associated proteins MOB4, STRIP1 and STRIP2, PDCD10 and members of the STE20 kinases, such as STK24 and STK26. The STRIPAK complex can be extended by adapter proteins such as SLMAP:SIKE1 or CTTNBP2NL. Interacts with CDC42BPB.

It localises to the cytoplasm. Its subcellular location is the membrane. Its function is as follows. Calmodulin-binding scaffolding protein which is the center of the striatin-interacting phosphatase and kinase (STRIPAK) complexes. STRIPAK complexes have critical roles in protein (de)phosphorylation and are regulators of multiple signaling pathways including Hippo, MAPK, nuclear receptor and cytoskeleton remodeling. Different types of STRIPAK complexes are involved in a variety of biological processes such as cell growth, differentiation, apoptosis, metabolism and immune regulation. This Bos taurus (Bovine) protein is Striatin-3 (STRN3).